A 506-amino-acid chain; its full sequence is Ecdysteroid UDP-glucosyltransferase (506 aa).

Residues 1 to 18 (MTILCWLALLSTLTAVNA) form the signal peptide.

The protein belongs to the UDP-glycosyltransferase family. Post-translationally, glycosylated.

In terms of biological role, catalyzes the transfer of glucose from UDP-glucose to ecdysteroids which are insect molting hormones. Acts on the host at the organismal level to block its development, thereby increasing the yield of progeny virus. The chain is Ecdysteroid UDP-glucosyltransferase (EGT) from Lepidoptera (butterflies and moths).